Reading from the N-terminus, the 163-residue chain is Steroid receptor-associated and regulated protein (163 aa).

Residues 1-16 (MAFSKDPRRTSLRDSS) are compositionally biased toward basic and acidic residues. Disordered stretches follow at residues 1–30 (MAFS…CAPK) and 96–149 (ALDG…EKVK). A compositionally biased stretch (polar residues) spans 17-26 (VEMSSGTQPS).

In terms of assembly, interacts with 14-3-3 proteins.

Its function is as follows. May regulate the transcriptional function of androgen and estrogen receptors. This chain is Steroid receptor-associated and regulated protein, found in Mus musculus (Mouse).